The primary structure comprises 130 residues: Small ribosomal subunit protein uS8 (130 aa).

This sequence belongs to the universal ribosomal protein uS8 family. Part of the 30S ribosomal subunit. Contacts proteins S5 and S12.

Functionally, one of the primary rRNA binding proteins, it binds directly to 16S rRNA central domain where it helps coordinate assembly of the platform of the 30S subunit. In Pseudomonas fluorescens (strain SBW25), this protein is Small ribosomal subunit protein uS8.